The sequence spans 321 residues: Probable arabinan endo-1,5-alpha-L-arabinosidase C (321 aa).

An N-terminal signal peptide occupies residues 1–20; the sequence is MYLYTLILLFLASVNVNAYA. Residue aspartate 33 is the Proton acceptor of the active site. N-linked (GlcNAc...) asparagine glycosylation is found at asparagine 75 and asparagine 192. Catalysis depends on glutamate 200, which acts as the Proton donor. A glycan (N-linked (GlcNAc...) asparagine) is linked at asparagine 224.

Belongs to the glycosyl hydrolase 43 family.

It is found in the secreted. The enzyme catalyses Endohydrolysis of (1-&gt;5)-alpha-arabinofuranosidic linkages in (1-&gt;5)-arabinans.. Its pathway is glycan metabolism; L-arabinan degradation. In terms of biological role, endo-1,5-alpha-L-arabinanase involved in degradation of pectin. Its preferred substrate is linear 1,5-alpha-L-arabinan. In Neosartorya fischeri (strain ATCC 1020 / DSM 3700 / CBS 544.65 / FGSC A1164 / JCM 1740 / NRRL 181 / WB 181) (Aspergillus fischerianus), this protein is Probable arabinan endo-1,5-alpha-L-arabinosidase C (abnC).